A 215-amino-acid chain; its full sequence is Probable GTP-binding protein EngB (215 aa).

The region spanning 30-204 (EGLEVAFAGR…QMVLAQWLGL (175 aa)) is the EngB-type G domain. Residues 38-45 (GRSNAGKS), 64-68 (GRTQL), 82-85 (DLPG), 149-152 (TKAD), and 182-185 (LFSA) contribute to the GTP site. Residues Ser-45 and Thr-66 each contribute to the Mg(2+) site.

The protein belongs to the TRAFAC class TrmE-Era-EngA-EngB-Septin-like GTPase superfamily. EngB GTPase family. Requires Mg(2+) as cofactor.

Its function is as follows. Necessary for normal cell division and for the maintenance of normal septation. This chain is Probable GTP-binding protein EngB, found in Pseudomonas aeruginosa (strain ATCC 15692 / DSM 22644 / CIP 104116 / JCM 14847 / LMG 12228 / 1C / PRS 101 / PAO1).